We begin with the raw amino-acid sequence, 231 residues long: Large ribosomal subunit protein uL1 (231 aa).

This sequence belongs to the universal ribosomal protein uL1 family. Part of the 50S ribosomal subunit.

In terms of biological role, binds directly to 23S rRNA. The L1 stalk is quite mobile in the ribosome, and is involved in E site tRNA release. Its function is as follows. Protein L1 is also a translational repressor protein, it controls the translation of the L11 operon by binding to its mRNA. This Acetivibrio thermocellus (strain ATCC 27405 / DSM 1237 / JCM 9322 / NBRC 103400 / NCIMB 10682 / NRRL B-4536 / VPI 7372) (Clostridium thermocellum) protein is Large ribosomal subunit protein uL1.